The following is a 455-amino-acid chain: Argininosuccinate lyase (455 aa).

The protein belongs to the lyase 1 family. Argininosuccinate lyase subfamily.

It is found in the cytoplasm. It catalyses the reaction 2-(N(omega)-L-arginino)succinate = fumarate + L-arginine. It functions in the pathway amino-acid biosynthesis; L-arginine biosynthesis; L-arginine from L-ornithine and carbamoyl phosphate: step 3/3. In Shewanella denitrificans (strain OS217 / ATCC BAA-1090 / DSM 15013), this protein is Argininosuccinate lyase.